A 239-amino-acid chain; its full sequence is Lactose-binding lectin-2 (239 aa).

Positions 122 and 124 each coordinate Mn(2+). Residues aspartate 124, tyrosine 126, asparagine 128, and aspartate 131 each coordinate Ca(2+). Mn(2+) is bound by residues aspartate 131 and histidine 137.

This sequence belongs to the leguminous lectin family. In terms of assembly, homotetramer. Seed.

It is found in the vacuole. It localises to the aleurone grain. Functionally, lactose-binding lectin. Also binds derivatives of galactose, glucose, lactose, and mannose. Binds O-glycoproteins such as mucins more strongly than N-glycoproteins. Shows agglutinating activity towards rabbit erythrocytes. This is Lactose-binding lectin-2 from Cymbosema roseum (Dioclea purpurea).